Consider the following 210-residue polypeptide: Thymidylate kinase (210 aa).

ATP is bound at residue 9 to 16 (GLEGAGKS).

The protein belongs to the thymidylate kinase family.

The catalysed reaction is dTMP + ATP = dTDP + ADP. Its function is as follows. Phosphorylation of dTMP to form dTDP in both de novo and salvage pathways of dTTP synthesis. The polypeptide is Thymidylate kinase (Aliivibrio fischeri (strain ATCC 700601 / ES114) (Vibrio fischeri)).